Reading from the N-terminus, the 82-residue chain is MDSHFVYIVKCSDGSLYTGYAKDVNARVEKHNRGQGAKYTKVRRPVHLVYQEMYETKSEALKREYEIKTYTRQKKLRLIKER.

A GIY-YIG domain is found at 2-77; that stretch reads DSHFVYIVKC…KTYTRQKKLR (76 aa).

It belongs to the UPF0213 family.

The protein is UPF0213 protein MW0443 of Staphylococcus aureus (strain MW2).